Consider the following 435-residue polypeptide: AP-2 complex subunit mu (435 aa).

At Ser-45 the chain carries Phosphoserine. At Thr-156 the chain carries Phosphothreonine. The region spanning 170-434 (RNELFLDVLE…IGRSGIYETR (265 aa)) is the MHD domain. Lys-341, Lys-345, and Lys-354 together coordinate a 1,2-diacyl-sn-glycero-3-phospho-(1D-myo-inositol-3,4,5-trisphosphate).

Belongs to the adaptor complexes medium subunit family. In terms of assembly, adaptor protein complex 2 (AP-2) is a heterotetramer composed of two large adaptins (alpha-type subunit AP2A1 or AP2A2 and beta-type subunit AP2B1), a medium adaptin (mu-type subunit AP2M1) and a small adaptin (sigma-type subunit AP2S1). Interacts with ATP6V1H and MEGF10. Interacts with EGFR. Interacts with PIP5K1C; tyrosine phosphorylation of PIP5K1C weakens the interaction. Interacts with KIAA0319; required for clathrin-mediated endocytosis of KIAA0319. Interacts with DVL2 (via DEP domain). Interacts with KCNQ1; mediates estrogen-induced internalization via clathrin-coated vesicles. Together with AP2A1 or AP2A2 and AP2B1, it interacts with ADAM10; this interaction facilitates ADAM10 endocytosis from the plasma membrane during long-term potentiation in hippocampal neurons. Probably interacts with ACE2 (via endocytic sorting signal motif); the interaction is inhibited by ACE2 phosphorylation. Interacts with RALBP1; the interaction is direct. Interacts with TMEM106B (via N-terminus). In terms of processing, phosphorylation at Thr-156 increases the affinity of the AP-2 complex for cargo membrane proteins during the initial stages of endocytosis.

It is found in the cell membrane. The protein localises to the membrane. Its subcellular location is the coated pit. Its function is as follows. Component of the adaptor protein complex 2 (AP-2). Adaptor protein complexes function in protein transport via transport vesicles in different membrane traffic pathways. Adaptor protein complexes are vesicle coat components and appear to be involved in cargo selection and vesicle formation. AP-2 is involved in clathrin-dependent endocytosis in which cargo proteins are incorporated into vesicles surrounded by clathrin (clathrin-coated vesicles, CCVs) which are destined for fusion with the early endosome. The clathrin lattice serves as a mechanical scaffold but is itself unable to bind directly to membrane components. Clathrin-associated adaptor protein (AP) complexes which can bind directly to both the clathrin lattice and to the lipid and protein components of membranes are considered to be the major clathrin adaptors contributing the CCV formation. AP-2 also serves as a cargo receptor to selectively sort the membrane proteins involved in receptor-mediated endocytosis. AP-2 seems to play a role in the recycling of synaptic vesicle membranes from the presynaptic surface. AP-2 recognizes Y-X-X-[FILMV] (Y-X-X-Phi) and [ED]-X-X-X-L-[LI] endocytosis signal motifs within the cytosolic tails of transmembrane cargo molecules. AP-2 may also play a role in maintaining normal post-endocytic trafficking through the ARF6-regulated, non-clathrin pathway. During long-term potentiation in hippocampal neurons, AP-2 is responsible for the endocytosis of ADAM10. The AP-2 mu subunit binds to transmembrane cargo proteins; it recognizes the Y-X-X-Phi motifs. The surface region interacting with to the Y-X-X-Phi motif is inaccessible in cytosolic AP-2, but becomes accessible through a conformational change following phosphorylation of AP-2 mu subunit at Thr-156 in membrane-associated AP-2. The membrane-specific phosphorylation event appears to involve assembled clathrin which activates the AP-2 mu kinase AAK1. Plays a role in endocytosis of frizzled family members upon Wnt signaling. In Pongo abelii (Sumatran orangutan), this protein is AP-2 complex subunit mu (AP2M1).